A 187-amino-acid chain; its full sequence is Pre-mRNA-splicing factor cwf7 (187 aa).

Belongs to the SPF27 family. As to quaternary structure, belongs to the 40S cdc5-associated complex (or cwf complex), a spliceosome sub-complex reminiscent of a late-stage spliceosome composed of the U2, U5 and U6 snRNAs and at least brr2, cdc5, cwf2/prp3, cwf3/syf1, cwf4/syf3, cwf5/ecm2, spp42/cwf6, cwf7/spf27, cwf8, cwf9, cwf10, cwf11, cwf12, prp45/cwf13, cwf14, cwf15, cwf16, cwf17, cwf18, cwf19, cwf20, cwf21, cwf22, cwf23, cwf24, cwf25, cwf26, cyp7/cwf27, cwf28, cwf29/ist3, lea1, msl1, prp5/cwf1, prp10, prp12/sap130, prp17, prp22, sap61, sap62, sap114, sap145, slu7, smb1, smd1, smd3, smf1, smg1 and syf2.

The protein localises to the nucleus. Its function is as follows. Involved in mRNA splicing. The polypeptide is Pre-mRNA-splicing factor cwf7 (cwf7) (Schizosaccharomyces pombe (strain 972 / ATCC 24843) (Fission yeast)).